We begin with the raw amino-acid sequence, 81 residues long: Small ribosomal subunit protein bS20 (81 aa).

Residues 1–11 are compositionally biased toward basic residues; sequence MPNIKSQKKRV. Residues 1–20 are disordered; sequence MPNIKSQKKRVLTNEKSRAS.

It belongs to the bacterial ribosomal protein bS20 family.

Functionally, binds directly to 16S ribosomal RNA. The chain is Small ribosomal subunit protein bS20 from Mesoplasma florum (strain ATCC 33453 / NBRC 100688 / NCTC 11704 / L1) (Acholeplasma florum).